The primary structure comprises 521 residues: Interleukin-9 receptor (521 aa).

Positions 1-40 (MGLGRCIWEGWTLESEALRRDMGTWLLACICICTCVCLGV) are cleaved as a signal peptide. The Extracellular portion of the chain corresponds to 41-270 (SVTGEGQGPR…GPLIPPWGWP (230 aa)). N-linked (GlcNAc...) asparagine glycosylation is found at Asn117 and Asn156. The region spanning 149 to 259 (PPSDLQSNIS…QPVCFQAPQR (111 aa)) is the Fibronectin type-III domain. A WSXWS motif motif is present at residues 245–249 (WSEWS). The helical transmembrane segment at 271–291 (GNTLVAVSIFLLLTGPTYLLF) threads the bilayer. The Cytoplasmic portion of the chain corresponds to 292 to 521 (KLSPRVKRIF…VLSKARSWTF (230 aa)). The Box 1 motif motif lies at 301-309 (FYQNVPSPA). A disordered region spans residues 413 to 439 (WAPTSLTRPAPPDSEGSRSSSSSSSSN). Residues 429–439 (SRSSSSSSSSN) show a composition bias toward low complexity.

The protein belongs to the type I cytokine receptor family. Type 4 subfamily. Interacts with IL9.

It localises to the cell membrane. Its subcellular location is the secreted. In terms of biological role, plays an important role in the immune response against parasites by acting as a receptor of IL9. This chain is Interleukin-9 receptor (IL9R), found in Homo sapiens (Human).